The following is a 280-amino-acid chain: MVEATKKAFVTGHPIKHSRSPKIHGHWLAQHGIDGSYEAIDVAPQDFAEFIAALQANGFRGGNVTIPHKEAAFAVAQRRDQAAEEIGAVNTLWFEDGVLRGGNTDGHGFAANLDDCAPGWANTGPAVVLGAGGASRAVIQALKQRGFSDIRIVNRTLARAQELRDRFGAGVSAHGTAATDELLADAGLLVNTTALGMVGNEGLAADPALLPDHAIVTDLVYVPLETPLLAAARARGLKTVDGLGMLLNQAVPGFEHWFGVRPQVTAELRALIVADLVPKP.

Shikimate contacts are provided by residues 18-20 (SRS) and Thr65. Residue Lys69 is the Proton acceptor of the active site. The shikimate site is built by Asn90 and Asp105. Residues 130–134 (GAGGA), 154–159 (NRTLAR), and Leu219 each bind NADP(+). Tyr221 contacts shikimate. Gly242 lines the NADP(+) pocket.

It belongs to the shikimate dehydrogenase family. As to quaternary structure, homodimer.

The catalysed reaction is shikimate + NADP(+) = 3-dehydroshikimate + NADPH + H(+). Its pathway is metabolic intermediate biosynthesis; chorismate biosynthesis; chorismate from D-erythrose 4-phosphate and phosphoenolpyruvate: step 4/7. Its function is as follows. Involved in the biosynthesis of the chorismate, which leads to the biosynthesis of aromatic amino acids. Catalyzes the reversible NADPH linked reduction of 3-dehydroshikimate (DHSA) to yield shikimate (SA). This chain is Shikimate dehydrogenase (NADP(+)), found in Mesorhizobium japonicum (strain LMG 29417 / CECT 9101 / MAFF 303099) (Mesorhizobium loti (strain MAFF 303099)).